A 210-amino-acid polypeptide reads, in one-letter code: UPF0301 protein M446_6268 (210 aa).

The protein belongs to the UPF0301 (AlgH) family.

This Methylobacterium sp. (strain 4-46) protein is UPF0301 protein M446_6268.